The primary structure comprises 658 residues: Putative arrestin-related trafficking adapter C2D10.04 (658 aa).

Disordered regions lie at residues 21 to 107 (LHHQ…LTWS) and 638 to 658 (REEA…EIPR). Over residues 39-81 (NRSSNSGLNRRNSVFGLPSSGLSSRLSKPSLSSINNSNNSSSN) the composition is skewed to low complexity. Positions 96-107 (RNMSNKPPLTWS) are enriched in polar residues. Phosphoserine is present on serine 653.

The protein belongs to the ALY1 family.

The protein localises to the cytoplasm. Functionally, may regulate endocytosis in response to extracellular stimuli. This chain is Putative arrestin-related trafficking adapter C2D10.04, found in Schizosaccharomyces pombe (strain 972 / ATCC 24843) (Fission yeast).